We begin with the raw amino-acid sequence, 648 residues long: Outer capsid protein VP4 (648 aa).

Gly2 carries N-myristoyl glycine; by host lipidation. Asn12, Asn311, Asn312, Asn390, Asn453, and Asn492 each carry an N-linked (GlcNAc...) asparagine; by host glycan.

Belongs to the aquareoviridae outer capsid VP4 protein family. As to quaternary structure, interacts with VP6 and VP7. In terms of processing, cleaved during the endosomal proteolytic disassembly of the outer capsid. N-terminally myristoylated. This acylation is essential for the membrane fusion activity.

It is found in the virion. Interacts with VP7 to form the outer icosahedral capsid with an incomplete T=13 symmetry, about 80 nm in diameter, and consisting of 200 VP4-VP7 trimers. Myristoylated N-terminal peptide may be released in the endosome and involved in permeabilization and delivery of transcriptionally active viral particles into the host cell cytoplasm (Potential). The sequence is that of Outer capsid protein VP4 (S6) from Notemigonus crysoleucas (Golden shiner).